A 533-amino-acid polypeptide reads, in one-letter code: Retinoid isomerohydrolase (533 aa).

Ser2 is subject to N-acetylserine. Phosphothreonine is present on residues Thr101 and Thr105. A lipid anchor (S-palmitoyl cysteine; in membrane form) is attached at Cys112. Lys113 carries the post-translational modification N6-acetyllysine. Ser117 carries the phosphoserine modification. His180 serves as a coordination point for Fe cation. A lipid anchor (S-palmitoyl cysteine; in membrane form) is attached at Cys231. His241 and His313 together coordinate Fe cation. Residues Cys329 and Cys330 are each lipidated (S-palmitoyl cysteine; in membrane form). Residue His527 coordinates Fe cation.

The protein belongs to the carotenoid oxygenase family. In terms of assembly, interacts with MYO7A; this mediates light-dependent intracellular transport of RPE65. Requires Fe(2+) as cofactor. In terms of processing, palmitoylation by LRAT regulates ligand binding specificity; the palmitoylated form (membrane form) specifically binds all-trans-retinyl-palmitate, while the soluble unpalmitoylated form binds all-trans-retinol (vitamin A). As to expression, retinal pigment epithelium specific.

The protein resides in the cytoplasm. The protein localises to the cell membrane. It is found in the microsome membrane. It catalyses the reaction an all-trans-retinyl ester + H2O = 11-cis-retinol + a fatty acid + H(+). The catalysed reaction is lutein = (3R,3'S)-zeaxanthin. It carries out the reaction all-trans-retinyl hexadecanoate + H2O = 11-cis-retinol + hexadecanoate + H(+). Its function is as follows. Critical isomerohydrolase in the retinoid cycle involved in regeneration of 11-cis-retinal, the chromophore of rod and cone opsins. Catalyzes the cleavage and isomerization of all-trans-retinyl fatty acid esters to 11-cis-retinol which is further oxidized by 11-cis retinol dehydrogenase to 11-cis-retinal for use as visual chromophore. Essential for the production of 11-cis retinal for both rod and cone photoreceptors. Also capable of catalyzing the isomerization of lutein to meso-zeaxanthin an eye-specific carotenoid. The soluble form binds vitamin A (all-trans-retinol), making it available for LRAT processing to all-trans-retinyl ester. The membrane form, palmitoylated by LRAT, binds all-trans-retinyl esters, making them available for IMH (isomerohydrolase) processing to all-cis-retinol. The soluble form is regenerated by transferring its palmitoyl groups onto 11-cis-retinol, a reaction catalyzed by LRAT. The chain is Retinoid isomerohydrolase (Rpe65) from Mus musculus (Mouse).